The chain runs to 885 residues: Initiator protein NS1 (885 aa).

A disordered region spans residues 404 to 477; the sequence is AEAGPSGTQP…GREDIFSGAP (74 aa). The span at 409–423 shows a compositional bias: polar residues; sequence SGTQPVETAQQSPPT. The segment covering 452–465 has biased composition (gly residues); that stretch reads QAAGGSEMGAGGSA.

The protein belongs to the parvoviruses initiator protein NS1 family. As to quaternary structure, homooligomer. Mg(2+) serves as cofactor.

The protein resides in the host nucleus. It carries out the reaction ATP + H2O = ADP + phosphate + H(+). Multifunctional protein which displays endonuclease and helicase activities required for initiating and directing viral DNA replication. Also plays a role in viral packaging and transactivation of several promoters. Binds site-specifically to 2-3 approximate tandem copies within the origins of replication (Ori), unwinds this hairpin region and nicks one DNA strand thereby initiating the rolling circle replication (RCR). The sequence is that of Initiator protein NS1 from Bombyx mori densovirus (BmDNV).